The following is a 554-amino-acid chain: Arginine--tRNA ligase (554 aa).

The 'HIGH' region signature appears at 132 to 142; it reads ANPTGPLHIGH.

Belongs to the class-I aminoacyl-tRNA synthetase family. In terms of assembly, monomer.

The protein localises to the cytoplasm. The enzyme catalyses tRNA(Arg) + L-arginine + ATP = L-arginyl-tRNA(Arg) + AMP + diphosphate. This is Arginine--tRNA ligase from Pseudarthrobacter chlorophenolicus (strain ATCC 700700 / DSM 12829 / CIP 107037 / JCM 12360 / KCTC 9906 / NCIMB 13794 / A6) (Arthrobacter chlorophenolicus).